Consider the following 341-residue polypeptide: Methionine import ATP-binding protein MetN 1 (341 aa).

An ABC transporter domain is found at 2 to 241 (IEFRQVSKTF…PKTTIAQNFV (240 aa)). An ATP-binding site is contributed by 38–45 (GYSGAGKS).

Belongs to the ABC transporter superfamily. Methionine importer (TC 3.A.1.24) family. As to quaternary structure, the complex is composed of two ATP-binding proteins (MetN), two transmembrane proteins (MetI) and a solute-binding protein (MetQ).

Its subcellular location is the cell membrane. The catalysed reaction is L-methionine(out) + ATP + H2O = L-methionine(in) + ADP + phosphate + H(+). It catalyses the reaction D-methionine(out) + ATP + H2O = D-methionine(in) + ADP + phosphate + H(+). Part of the ABC transporter complex MetNIQ involved in methionine import. Responsible for energy coupling to the transport system. In Staphylococcus aureus (strain MW2), this protein is Methionine import ATP-binding protein MetN 1.